Here is a 379-residue protein sequence, read N- to C-terminus: Guanine nucleotide-binding protein G(s) subunit alpha (379 aa).

Positions 1 to 29 (MGCFGSAGAKGDAEENKKRKEANKNINKQ) are disordered. Residue glycine 2 is the site of N-palmitoyl glycine attachment. Cysteine 3 is lipidated: S-palmitoyl cysteine. The region spanning 39 to 379 (ATHRLLLLGA…RMHLRQYELL (341 aa)) is the G-alpha domain. A G1 motif region spans residues 42–55 (RLLLLGAGESGKST). GTP is bound by residues 47-54 (GAGESGKS), 183-189 (LRCRVLT), 208-212 (DVGGQ), 277-280 (NKQD), and alanine 351. Serine 54 and threonine 189 together coordinate Mg(2+). The interval 181-189 (DILRCRVLT) is G2 motif. A G3 motif region spans residues 204-213 (FHMFDVGGQR). The tract at residues 273 to 280 (ILFLNKQD) is G4 motif. Residues 349–354 (TCAVDT) are G5 motif.

It belongs to the G-alpha family. G(s) subfamily. G proteins are composed of 3 units; alpha, beta and gamma. The alpha chain contains the guanine nucleotide binding site.

Functionally, guanine nucleotide-binding proteins (G proteins) are involved as modulators or transducers in various transmembrane signaling systems. The G(s) protein is involved in hormonal regulation of adenylate cyclase: it activates the cyclase in response to beta-adrenergic stimuli. The polypeptide is Guanine nucleotide-binding protein G(s) subunit alpha (Homarus americanus (American lobster)).